The chain runs to 332 residues: Probable L-asparaginase (332 aa).

Positions 6–332 (PTIALLATGG…AKIQEMFEEY (327 aa)) constitute an Asparaginase/glutaminase domain. Threonine 16 functions as the O-isoaspartyl threonine intermediate in the catalytic mechanism. Residues serine 62 and 95 to 96 (TD) contribute to the substrate site.

The protein belongs to the asparaginase 1 family.

The protein localises to the cytoplasm. It catalyses the reaction L-asparagine + H2O = L-aspartate + NH4(+). The sequence is that of Probable L-asparaginase (ansA) from Helicobacter pylori (strain J99 / ATCC 700824) (Campylobacter pylori J99).